A 317-amino-acid chain; its full sequence is Acetyl-coenzyme A carboxylase carboxyl transferase subunit alpha (317 aa).

In terms of domain architecture, CoA carboxyltransferase C-terminal spans 31–292 (RFEPELAQLE…DKALWATLTS (262 aa)).

The protein belongs to the AccA family. As to quaternary structure, acetyl-CoA carboxylase is a heterohexamer composed of biotin carboxyl carrier protein (AccB), biotin carboxylase (AccC) and two subunits each of ACCase subunit alpha (AccA) and ACCase subunit beta (AccD).

It is found in the cytoplasm. The catalysed reaction is N(6)-carboxybiotinyl-L-lysyl-[protein] + acetyl-CoA = N(6)-biotinyl-L-lysyl-[protein] + malonyl-CoA. Its pathway is lipid metabolism; malonyl-CoA biosynthesis; malonyl-CoA from acetyl-CoA: step 1/1. Component of the acetyl coenzyme A carboxylase (ACC) complex. First, biotin carboxylase catalyzes the carboxylation of biotin on its carrier protein (BCCP) and then the CO(2) group is transferred by the carboxyltransferase to acetyl-CoA to form malonyl-CoA. This chain is Acetyl-coenzyme A carboxylase carboxyl transferase subunit alpha, found in Sorangium cellulosum (strain So ce56) (Polyangium cellulosum (strain So ce56)).